The chain runs to 930 residues: Protein translocase subunit SecA (930 aa).

Residues Gln87, Gly105–Thr109, and Asp515 each bind ATP. Zn(2+) is bound by residues Cys914, Cys916, Cys925, and His926.

This sequence belongs to the SecA family. As to quaternary structure, monomer and homodimer. Part of the essential Sec protein translocation apparatus which comprises SecA, SecYEG and auxiliary proteins SecDF-YajC and YidC. Zn(2+) serves as cofactor.

It localises to the cell inner membrane. The protein resides in the cytoplasm. It carries out the reaction ATP + H2O + cellular proteinSide 1 = ADP + phosphate + cellular proteinSide 2.. Functionally, part of the Sec protein translocase complex. Interacts with the SecYEG preprotein conducting channel. Has a central role in coupling the hydrolysis of ATP to the transfer of proteins into and across the cell membrane, serving both as a receptor for the preprotein-SecB complex and as an ATP-driven molecular motor driving the stepwise translocation of polypeptide chains across the membrane. This is Protein translocase subunit SecA from Burkholderia vietnamiensis (strain G4 / LMG 22486) (Burkholderia cepacia (strain R1808)).